Here is a 632-residue protein sequence, read N- to C-terminus: Probable potassium transport system protein Kup (632 aa).

The next 12 helical transmembrane spans lie at 19–39, 59–79, 110–130, 146–166, 178–198, 221–241, 256–276, 298–318, 346–366, 375–395, 403–423, and 428–448; these read LVVG…LYSL, IISM…VMFV, LIMM…VITP, PGLS…LFFI, FGPI…IHLV, LQAF…EALY, WFVL…AMLL, MVLL…SGAF, IYMP…VLAF, AYGI…ALVM, PALV…FFAA, and IAEG…LLMT.

Belongs to the HAK/KUP transporter (TC 2.A.72) family.

Its subcellular location is the cell inner membrane. The catalysed reaction is K(+)(in) + H(+)(in) = K(+)(out) + H(+)(out). Transport of potassium into the cell. Likely operates as a K(+):H(+) symporter. The chain is Probable potassium transport system protein Kup from Cupriavidus metallidurans (strain ATCC 43123 / DSM 2839 / NBRC 102507 / CH34) (Ralstonia metallidurans).